Reading from the N-terminus, the 428-residue chain is Pregnancy-specific beta-1-glycoprotein 3 (428 aa).

Residues 1–34 form the signal peptide; it reads MGPLSAPPCTQRITWKGLLLTALLLNFWNLPTTA. One can recognise an Ig-like V-type domain in the interval 35–144; the sequence is QVTIEAEPTK…TGHFTFTLYL (110 aa). Residues Asn-104 and Asn-111 are each glycosylated (N-linked (GlcNAc...) asparagine). The Cell attachment site signature appears at 127 to 129; that stretch reads RGD. 3 consecutive Ig-like C2-type domains span residues 147–234, 240–327, and 335–410; these read PKPS…VTLN, PKPY…VTLN, and PRIY…KSMT. 3 disulfide bridges follow: Cys-169/Cys-217, Cys-262/Cys-310, and Cys-354/Cys-394. 2 N-linked (GlcNAc...) asparagine glycosylation sites follow: Asn-268 and Asn-303.

It belongs to the immunoglobulin superfamily. CEA family.

It is found in the secreted. The protein is Pregnancy-specific beta-1-glycoprotein 3 (PSG3) of Homo sapiens (Human).